We begin with the raw amino-acid sequence, 349 residues long: UPF0284 protein MA_3887 (349 aa).

This sequence belongs to the UPF0284 family.

This chain is UPF0284 protein MA_3887, found in Methanosarcina acetivorans (strain ATCC 35395 / DSM 2834 / JCM 12185 / C2A).